A 275-amino-acid polypeptide reads, in one-letter code: Small ribosomal subunit protein uS3 (275 aa).

Positions 38-106 (IRRLLSSGLE…QVQLNILEVK (69 aa)) constitute a KH type-2 domain. Positions 217 to 275 (AVPAGADRPRRERPAGSRPRRSGASGTTATGTEAGRAVGSEEPAAAESATTPEAQSTES) are disordered. A compositionally biased stretch (low complexity) spans 238 to 275 (SGASGTTATGTEAGRAVGSEEPAAAESATTPEAQSTES).

Belongs to the universal ribosomal protein uS3 family. In terms of assembly, part of the 30S ribosomal subunit. Forms a tight complex with proteins S10 and S14.

Functionally, binds the lower part of the 30S subunit head. Binds mRNA in the 70S ribosome, positioning it for translation. The polypeptide is Small ribosomal subunit protein uS3 (Mycobacterium marinum (strain ATCC BAA-535 / M)).